A 708-amino-acid chain; its full sequence is Metal-pseudopaline receptor CntO (708 aa).

The signal sequence occupies residues 1-21 (MRVSVSLVLGVGLGCSSPALW). The TBDR plug domain occupies 63 to 169 (RIEDIPQAIS…PGGTVNLVTK (107 aa)). The region spanning 174–708 (ERFARLHASA…NLTMSLTLNY (535 aa)) is the TBDR beta-barrel domain.

It belongs to the TonB-dependent receptor family.

Its subcellular location is the cell outer membrane. Functionally, transports the metallophore pseudopaline, which is involved in the acquisition of nickel and zinc, and thus enables bacterial growth inside the host, where metal access is limited. Is probably involved in the import of pseudopaline-metal complexes. This is Metal-pseudopaline receptor CntO from Pseudomonas aeruginosa (strain ATCC 15692 / DSM 22644 / CIP 104116 / JCM 14847 / LMG 12228 / 1C / PRS 101 / PAO1).